Here is a 585-residue protein sequence, read N- to C-terminus: MNIFADFSDRIINAVKALELKPKEGGELDLSRVAVEPPRDPSHGDIATNAAMVLSKAVGENPRALGERLAAALAEDPDVAEASVAGPGFVNLRLGNGFWHARLGEMLLLAGDYGRSKMGNGHKVNVEYVSANPTGPMHVGHCRGAVVGDALSNLLAFAGYDVTREYYINDAGAQIDVLGRSVLMRYREALGEDIGQIPEGLYPGDYLKPVGKALADEYGTKLLERPAEEALKIAKDTAIDAMMAMIREDLAALNVHHDVFFSERSLHAGNGGTIRSAINDLTLKGHVYKGKLPPPKGQVLEDWEDREQTLFRSTDVGDDIDRPLIKSDGTFTYFAADVAYMKDKYSRGFEHLIYVLGADHGGYVKRLEALARAISEGKLHLTVLLCQLVKLFRNGEPVRMSKRAGEFVTLRDVIDEVGRDAVRFMMLYRKSDAPLDFDFAKVTEQSKDNPVFYVQYASARCHSVFRQASEQLNVRKFDREAMKAALHRLDDPGEIALIRKLAEYPRLIESAAQALEPHRLAFYLYELANQFHVQWNRGSETDRLRFVKVNDPELTHARLGLVQAVCDVVRSGLALVGADAPEEMR.

The 'HIGH' region signature appears at alanine 131–histidine 141.

The protein belongs to the class-I aminoacyl-tRNA synthetase family. Monomer.

It is found in the cytoplasm. The catalysed reaction is tRNA(Arg) + L-arginine + ATP = L-arginyl-tRNA(Arg) + AMP + diphosphate. The protein is Arginine--tRNA ligase of Chelativorans sp. (strain BNC1).